A 123-amino-acid polypeptide reads, in one-letter code: Small ribosomal subunit protein uS12 (123 aa).

At D89 the chain carries 3-methylthioaspartic acid. Residues 101 to 123 form a disordered region; sequence TLDTSGVSDRRQSRSKYGAKRPK. Over residues 113–123 the composition is skewed to basic residues; sequence SRSKYGAKRPK.

Belongs to the universal ribosomal protein uS12 family. As to quaternary structure, part of the 30S ribosomal subunit. Contacts proteins S8 and S17. May interact with IF1 in the 30S initiation complex.

In terms of biological role, with S4 and S5 plays an important role in translational accuracy. Its function is as follows. Interacts with and stabilizes bases of the 16S rRNA that are involved in tRNA selection in the A site and with the mRNA backbone. Located at the interface of the 30S and 50S subunits, it traverses the body of the 30S subunit contacting proteins on the other side and probably holding the rRNA structure together. The combined cluster of proteins S8, S12 and S17 appears to hold together the shoulder and platform of the 30S subunit. The polypeptide is Small ribosomal subunit protein uS12 (Solidesulfovibrio magneticus (strain ATCC 700980 / DSM 13731 / RS-1) (Desulfovibrio magneticus)).